Reading from the N-terminus, the 161-residue chain is Efficient mitochondria targeting-associated protein 19 (161 aa).

Over 1-10 the chain is Cytoplasmic; the sequence is MKLGHREQQF. The EXPERA domain maps to 7-159; the sequence is EQQFYLWYFI…PTFLIPLRLC (153 aa). A helical transmembrane segment spans residues 11-31; that stretch reads YLWYFIVHIPITIFIDSSVVI. The Lumenal portion of the chain corresponds to 32 to 61; sequence PAKWQLGIAQKVVSDHIAKQHDFLLSEKPE. Residues 62–82 traverse the membrane as a helical segment; the sequence is WLYWFVVLELVLQLPLFVYFV. Residues 83–101 are Cytoplasmic-facing; sequence NKFWNSSELQVNTNSRLKK. Residues 102-122 form a helical membrane-spanning segment; it reads WLRIYGWNASLTTLICIVVIF. Over 123 to 141 the chain is Lumenal; sequence KRGYIPYDVLKTSLSMTQK. The chain crosses the membrane as a helical span at residues 142 to 160; sequence CQLASVYLPTFLIPLRLCF. Position 161 (Val161) is a topological domain, cytoplasmic.

It belongs to the TMEM97/sigma-2 receptor family.

Its subcellular location is the endoplasmic reticulum membrane. Its function is as follows. Part of an import route for newly synthesized mitochondrial proteins termed the ER-SURF pathway (ER surface-mediated protein targeting), which retrieves mitochondrial precursor proteins from the ER surface and reroutes them to mitochondria for efficient mitochondrial import. Acts as a quality control factor in the ER, promoting the proteolytic degradation of nonproductive and extramitochondrial precursor proteins in the ER membrane thus removing them from the ER surface. The chain is Efficient mitochondria targeting-associated protein 19 from Saccharomyces cerevisiae (strain ATCC 204508 / S288c) (Baker's yeast).